Reading from the N-terminus, the 384-residue chain is 8-amino-7-oxononanoate synthase (384 aa).

Arg-21 is a binding site for substrate. 108-109 contacts pyridoxal 5'-phosphate; that stretch reads GF. Substrate is bound at residue His-133. Pyridoxal 5'-phosphate is bound by residues Ser-179, His-207, and Thr-233. Residue Lys-236 is modified to N6-(pyridoxal phosphate)lysine. Thr-352 contributes to the substrate binding site.

It belongs to the class-II pyridoxal-phosphate-dependent aminotransferase family. BioF subfamily. Homodimer. The cofactor is pyridoxal 5'-phosphate.

The catalysed reaction is 6-carboxyhexanoyl-[ACP] + L-alanine + H(+) = (8S)-8-amino-7-oxononanoate + holo-[ACP] + CO2. The protein operates within cofactor biosynthesis; biotin biosynthesis. Functionally, catalyzes the decarboxylative condensation of pimeloyl-[acyl-carrier protein] and L-alanine to produce 8-amino-7-oxononanoate (AON), [acyl-carrier protein], and carbon dioxide. This is 8-amino-7-oxononanoate synthase from Citrobacter koseri (strain ATCC BAA-895 / CDC 4225-83 / SGSC4696).